The primary structure comprises 173 residues: Large ribosomal subunit protein uL14mz (173 aa).

The N-terminal 61 residues, 1–61 (MAAAFASRLT…TVLKVVDNSG (61 aa)), are a transit peptide targeting the mitochondrion.

The protein belongs to the universal ribosomal protein uL14 family. As to quaternary structure, part of the mitochondrial 50S ribosomal subunit. As to expression, mostly expressed in leaves and inflorescences, including floral organs and meristems, and, to a lower extent, in pistils.

Its subcellular location is the mitochondrion. Binds to 23S rRNA in mitochondrion. The sequence is that of Large ribosomal subunit protein uL14mz (HLP) from Arabidopsis thaliana (Mouse-ear cress).